A 354-amino-acid polypeptide reads, in one-letter code: 4-hydroxy-2-oxovalerate aldolase 5 (354 aa).

Residues 11–263 (VTVHDMCLRD…ETGCDLFKLM (253 aa)) enclose the Pyruvate carboxyltransferase domain. A substrate-binding site is contributed by 19–20 (RD). Aspartate 20 serves as a coordination point for Mn(2+). The active-site Proton acceptor is histidine 23. Serine 173 and histidine 202 together coordinate substrate. Mn(2+)-binding residues include histidine 202 and histidine 204. Tyrosine 293 lines the substrate pocket.

Belongs to the 4-hydroxy-2-oxovalerate aldolase family.

It carries out the reaction (S)-4-hydroxy-2-oxopentanoate = acetaldehyde + pyruvate. This chain is 4-hydroxy-2-oxovalerate aldolase 5, found in Dechloromonas aromatica (strain RCB).